A 148-amino-acid polypeptide reads, in one-letter code: Snaclec 8 (148 aa).

An N-terminal signal peptide occupies residues 1–23 (MGRFIFVSFSLLVVFFSLSGTEA). Residues 34-148 (YDQNCYKAFE…DTQFRLQEPG (115 aa)) enclose the C-type lectin domain.

Belongs to the snaclec family. As to quaternary structure, heterodimer; disulfide-linked. In terms of processing, contains disulfide bonds. Expressed by the venom gland.

It localises to the secreted. Its function is as follows. Interferes with one step of hemostasis (modulation of platelet aggregation, or coagulation cascade, for example). The chain is Snaclec 8 from Echis carinatus sochureki (Saw-scaled viper).